A 327-amino-acid polypeptide reads, in one-letter code: Phospho-N-acetylmuramoyl-pentapeptide-transferase (327 aa).

10 consecutive transmembrane segments (helical) span residues 3 to 23, 51 to 71, 75 to 95, 115 to 135, 140 to 160, 172 to 192, 197 to 217, 223 to 243, 248 to 268, and 306 to 326; these read IALI…PAFI, TMGG…IGLF, LSNG…VGFL, LFLQ…HGAG, IFTV…FWLI, IDGL…VIAV, FDIL…FVFN, IFMG…ISIS, WTLL…MMQV, and VDFF…AILY.

The protein belongs to the glycosyltransferase 4 family. MraY subfamily. It depends on Mg(2+) as a cofactor.

The protein localises to the cell membrane. The enzyme catalyses UDP-N-acetyl-alpha-D-muramoyl-L-alanyl-gamma-D-glutamyl-L-lysyl-D-alanyl-D-alanine + di-trans,octa-cis-undecaprenyl phosphate = Mur2Ac(oyl-L-Ala-gamma-D-Glu-L-Lys-D-Ala-D-Ala)-di-trans,octa-cis-undecaprenyl diphosphate + UMP. The protein operates within cell wall biogenesis; peptidoglycan biosynthesis. Its function is as follows. Catalyzes the initial step of the lipid cycle reactions in the biosynthesis of the cell wall peptidoglycan: transfers peptidoglycan precursor phospho-MurNAc-pentapeptide from UDP-MurNAc-pentapeptide onto the lipid carrier undecaprenyl phosphate, yielding undecaprenyl-pyrophosphoryl-MurNAc-pentapeptide, known as lipid I. In Streptococcus sanguinis (strain SK36), this protein is Phospho-N-acetylmuramoyl-pentapeptide-transferase.